Reading from the N-terminus, the 212-residue chain is Adenylate kinase (212 aa).

10–15 serves as a coordination point for ATP; that stretch reads GAGKGT. Residues 30–59 form an NMP region; sequence STGDMFRAAMANQTEMGVLAKSYIDKGELV. AMP-binding positions include threonine 31, arginine 36, 57-59, 86-89, and glutamine 93; these read ELV and GYPR. Positions 127–159 are LID; it reads GRIIHRQTGETFHKVFNPPANYNEEDYYQREDD. Residues arginine 128 and 137–138 each bind ATP; that span reads TF. AMP-binding residues include arginine 156 and arginine 167. Glutamine 195 contributes to the ATP binding site.

This sequence belongs to the adenylate kinase family. As to quaternary structure, monomer.

Its subcellular location is the cytoplasm. It carries out the reaction AMP + ATP = 2 ADP. It functions in the pathway purine metabolism; AMP biosynthesis via salvage pathway; AMP from ADP: step 1/1. Catalyzes the reversible transfer of the terminal phosphate group between ATP and AMP. Plays an important role in cellular energy homeostasis and in adenine nucleotide metabolism. The sequence is that of Adenylate kinase from Streptococcus gordonii (strain Challis / ATCC 35105 / BCRC 15272 / CH1 / DL1 / V288).